A 1063-amino-acid chain; its full sequence is DNA-directed RNA polymerase subunit beta (1063 aa).

This sequence belongs to the RNA polymerase beta chain family. In terms of assembly, in plastids the minimal PEP RNA polymerase catalytic core is composed of four subunits: alpha, beta, beta', and beta''. When a (nuclear-encoded) sigma factor is associated with the core the holoenzyme is formed, which can initiate transcription.

The protein localises to the plastid. It is found in the chloroplast. It carries out the reaction RNA(n) + a ribonucleoside 5'-triphosphate = RNA(n+1) + diphosphate. Functionally, DNA-dependent RNA polymerase catalyzes the transcription of DNA into RNA using the four ribonucleoside triphosphates as substrates. The chain is DNA-directed RNA polymerase subunit beta from Zygnema circumcarinatum (Green alga).